A 397-amino-acid chain; its full sequence is Alpha-lytic protease (397 aa).

The first 24 residues, 1-24 (MYVSNHRSRRVARVSVSCLVAALA), serve as a signal peptide directing secretion. A propeptide spanning residues 25–199 (AMSCGAALAA…ESSPGKLQTT (175 aa)) is cleaved from the precursor. Cysteines 216 and 236 form a disulfide. Catalysis depends on charge relay system residues H235 and D262. Cystine bridges form between C300/C310 and C336/C369. S342 (charge relay system) is an active-site residue.

It belongs to the peptidase S1 family.

It catalyses the reaction Preferential cleavage: Ala-|-Xaa, Val-|-Xaa in bacterial cell walls, elastin and other proteins.. In Lysobacter enzymogenes, this protein is Alpha-lytic protease (alpha-LP).